The sequence spans 187 residues: Elongation factor P (187 aa).

This sequence belongs to the elongation factor P family.

It localises to the cytoplasm. The protein operates within protein biosynthesis; polypeptide chain elongation. In terms of biological role, involved in peptide bond synthesis. Stimulates efficient translation and peptide-bond synthesis on native or reconstituted 70S ribosomes in vitro. Probably functions indirectly by altering the affinity of the ribosome for aminoacyl-tRNA, thus increasing their reactivity as acceptors for peptidyl transferase. In Pseudarthrobacter chlorophenolicus (strain ATCC 700700 / DSM 12829 / CIP 107037 / JCM 12360 / KCTC 9906 / NCIMB 13794 / A6) (Arthrobacter chlorophenolicus), this protein is Elongation factor P.